The following is a 715-amino-acid chain: MSAALPAEPFRVSGGVNKVRFRSDTGFTVMSATLRNEQGEDPDATVIGVMPPLDVGDTFSAEVLMEEHREYGYQYRVVNMVLEAMPADLSEEGVAAYFEARVGGVGKVLAGRIAKTFGAAAFDLLEDDPQKFLQVPGITESTLHKMVSSWSQQGLERRLLAGLQGLGLTINQAQRAVKHFGADALDRLEKDLFTLTEVEGIGFLTADKLWQARGGALDDPRRLTAAAVYALQLAGTQAGHSFLPRSRAEKGVVHYTRVTPGQARLAVETAVELGRLSEDDSPLFAAEAAATGEGRIYLPHVLRAEKKLASLIRTLLATPPADGAGNDDWAVPKKARKGLSEEQASVLDQLAGHRLVVLTGGPGTGKSTTTKAVADLAESLGLEVGLCAPTGKAARRLGEVTGRTASTVHRLLGYGPQGFRHNHLEPAPYDLLIVDEVSMMGDALMLSLLAAVPPGARVLLVGDTDQLPPVDAGLPLLALAQAAPTIKLTQVYRQAAKNPIIQAAHGLLHGEAPAWGDKRLNLTEIEPDGGARRVALMVRELGGPGAVQVLTPMRKGPLGMDHLNYHLQALFNPGEGGVRIAEGEARPGDTVVQTKNDYNNEIFNGTLGMVLKAEGARLTVDFDGNVVELTGAELFNLQLGYALTVHRAQGSEWGTVLGVLHEAHMPMLSRNLVYTALTRARDRFFSAGSASAWQIAAARQREARNTALLERIRAH.

The segment at 1 to 150 is not required for helicase activity; it reads MSAALPAEPF…STLHKMVSSW (150 aa). ATP-binding positions include Gln343 and 363–367; that span reads GTGKS. 2 DNA-binding regions span residues Gly391 and 407–414; that span reads TVHRLLGY. ATP is bound at residue Gln466. A DNA-binding region is located at residue Val470. Arg493 is a binding site for ATP. 3 consecutive DNA-binding regions follow at residues 554–555, 596–604, and 644–647; these read RK, NDYNNEIFN, and TVHR. Arg679 is a binding site for ATP.

It belongs to the RecD family. RecD2 subfamily. Monomer; homodimers seem to be inactive.

It carries out the reaction Couples ATP hydrolysis with the unwinding of duplex DNA at the replication fork by translocating in the 5'-3' direction. This creates two antiparallel DNA single strands (ssDNA). The leading ssDNA polymer is the template for DNA polymerase III holoenzyme which synthesizes a continuous strand.. It catalyses the reaction ATP + H2O = ADP + phosphate + H(+). In terms of biological role, DNA-dependent ATPase (ssDNA stimulates the ATPase better than dsDNA) and ATP-dependent 5'-3' DNA helicase. Plays a role in an antioxidant pathway. Involved in DNA damage repair and/or recombination. Appears to move along DNA in single base steps, powered by hydrolysis of 1 molecule of ATP. Has low processivity, unwinds about 15-20 base pairs/second. Short (20 bp) substrates with 5'-overhangs or forked ends are the best substrates, is much less efficient on 52 or 76 bp substrates with 5'-overhangs. The presence of single-stranded DNA-binding protein (SSB) increases unwinding 4-5 fold. Has no activity on blunt DNA or DNA with 3'-overhangs. Requires at least 10 bases of 5'-ssDNA for helicase activity. This is ATP-dependent RecD2 DNA helicase from Deinococcus radiodurans (strain ATCC 13939 / DSM 20539 / JCM 16871 / CCUG 27074 / LMG 4051 / NBRC 15346 / NCIMB 9279 / VKM B-1422 / R1).